The following is a 961-amino-acid chain: Integrator complex subunit 7 (961 aa).

Residues 937–955 (QVRLQQQQGQPPSQQQQQR) show a composition bias toward low complexity. Residues 937 to 961 (QVRLQQQQGQPPSQQQQQRTAYSRF) are disordered.

Belongs to the Integrator subunit 7 family. As to quaternary structure, component of the Integrator complex, composed of core subunits INTS1, INTS2, INTS3, INTS4, INTS5, INTS6, INTS7, INTS8, INTS9/RC74, INTS10, INTS11/CPSF3L, INTS12, INTS13, INTS14 and INTS15. The core complex associates with protein phosphatase 2A subunits PPP2CA and PPP2R1A, to form the Integrator-PP2A (INTAC) complex.

The protein resides in the nucleus. The protein localises to the chromosome. It localises to the cytoplasm. Component of the integrator complex, a multiprotein complex that terminates RNA polymerase II (Pol II) transcription in the promoter-proximal region of genes. The integrator complex provides a quality checkpoint during transcription elongation by driving premature transcription termination of transcripts that are unfavorably configured for transcriptional elongation: the complex terminates transcription by (1) catalyzing dephosphorylation of the C-terminal domain (CTD) of Pol II subunit POLR2A/RPB1 and SUPT5H/SPT5, (2) degrading the exiting nascent RNA transcript via endonuclease activity and (3) promoting the release of Pol II from bound DNA. The integrator complex is also involved in terminating the synthesis of non-coding Pol II transcripts, such as enhancer RNAs (eRNAs), small nuclear RNAs (snRNAs), telomerase RNAs and long non-coding RNAs (lncRNAs). The polypeptide is Integrator complex subunit 7 (INTS7) (Gallus gallus (Chicken)).